We begin with the raw amino-acid sequence, 95 residues long: Small ribosomal subunit protein uS17 (95 aa).

It belongs to the universal ribosomal protein uS17 family. As to quaternary structure, part of the 30S ribosomal subunit.

Functionally, one of the primary rRNA binding proteins, it binds specifically to the 5'-end of 16S ribosomal RNA. The sequence is that of Small ribosomal subunit protein uS17 from Psychrobacter sp. (strain PRwf-1).